Consider the following 578-residue polypeptide: Ribonuclease SLFN12 (578 aa).

Residue serine 368 is modified to Phosphoserine. The interval 551–560 (AENLYQIIGI) is mediates interaction with PDE3A. Serine 573 carries the post-translational modification Phosphoserine.

The protein belongs to the Schlafen family. Subgroup II subfamily. As to quaternary structure, homodimer. Interacts with PDE3A; direct low affinity interaction which is stimulated by binding of 17beta-estradiol/E2 to PDE3A and that positively regulates the ribonuclease activity of SLFN12. Interacts with SERPINB12; as part of a pathway regulating cell differentiation. Phosphorylation at Ser-368 and Ser-573 negatively regulates the ribonuclease activity. Dephosphorylation is induced by the interaction with PDE3A and stimulates the rRNA ribonuclease activity.

It is found in the nucleus. Its subcellular location is the cytoplasm. The protein localises to the cytosol. Functionally, ribonuclease which is part of an E2/17beta-estradiol-induced pro-apoptotic signaling pathway. E2 stabilizes the PDE3A/SLFN12 complex in the cytosol, promoting the dephosphorylation of SLFN12 and activating its pro-apoptotic ribosomal RNA/rRNA ribonuclease activity. This apoptotic pathway might be relevant in tissues with high concentration of E2 and be for instance involved in placenta remodeling. May play a role in cell differentiation. This Homo sapiens (Human) protein is Ribonuclease SLFN12.